The chain runs to 1122 residues: RecBCD enzyme subunit RecC (1122 aa).

This sequence belongs to the RecC family. Heterotrimer of RecB, RecC and RecD. All subunits contribute to DNA-binding. Interacts with YgbT (Cas1). In terms of assembly, (Microbial infection) Lambda virus GamS protein interacts with the enzyme without displacing any of the subunits.

After reacting with DNA bearing a Chi site the holoenzyme is disassembled and loses exonuclease activity, DNA unwinding and Chi-directed DNA cleavage; RecB remains complexed with ssDNA, which may prevent holoenzyme reassembly. High levels of Mg(2+) (13 mM MgCl(2+)) or incubation with DNase allow holoenzyme reassembly, suggesting it is DNA bound to RecB that prevents reassembly. Its activity is regulated as follows. (Microbial infection) RecBCD is inhibited by the lambda virus gam protein (both GamL and GamS isoforms); in vitro a short preincubation prior to adding DNA results in maximal inhibition. Its function is as follows. A helicase/nuclease that prepares dsDNA breaks (DSB) for recombinational DNA repair. Binds to DSBs and unwinds DNA via a rapid (&gt;1 kb/second) and highly processive (&gt;30 kb) ATP-dependent bidirectional helicase. Unwinds dsDNA until it encounters a Chi (crossover hotspot instigator, 5'-GCTGGTGG-3') sequence from the 3' direction. Cuts ssDNA a few nucleotides 3' to Chi site, by nicking one strand or switching the strand degraded (depending on the reaction conditions). The properties and activities of the enzyme are changed at Chi. The Chi-altered holoenzyme produces a long 3'-ssDNA overhang which facilitates RecA-binding to the ssDNA for homologous DNA recombination and repair. Holoenzyme degrades any linearized DNA that is unable to undergo homologous recombination. In the holoenzyme this subunit almost certainly recognizes the wild-type Chi sequence, when added to isolated RecB increases its ATP-dependent helicase processivity. The RecBC complex requires the RecD subunit for nuclease activity, but can translocate along ssDNA in both directions. The RecBCD complex does not unwind G-quadruplex DNA. This chain is RecBCD enzyme subunit RecC, found in Escherichia coli (strain K12).